A 576-amino-acid polypeptide reads, in one-letter code: MSFEIPRKQYAQLYGPTTGDSIRLADTELFLEIEKDYTVYGEEVVFGGGKVIRDGMGQNGQLTRAEDIPDTVITNVIVLDYTGIYKADIALKDGHIFKIGKAGNPQITDGVDIVIGASTEIIAGERKILTAGGIDTHIHFISPEQVPAALCNGITTMVGGGTGPAEGTKATTITPGAWHISRMLQAAEGLPVNIGLFGKGHASAVEPLAEQIRAGAVGLKVHEDWGSTTSSIDMSLRVADEYDVQIAIHTDTLNECGFVEDTIRAIDGRVIHTFHTEGAGGGHAPDIIKIAGLPNVLPASTNPTLPYTRNTIEEHLDMLMVCHHLNPDIPEDVAFADSRIRAETIAAEDVLHDLGIFAITSSDSQAMGRVGEVVTRTWQVADAMKRQRGALHDPSGAPHGSAESDNFRLKRYIAKYTINAAIAQGMADVIGSVEEGKFADLVLWDPAFFGVKPELVIKGGQIAYALMGDANASIPTPQPRTMRPMFATYGKALQQTSITFLSQAAIDAGVPAELGLQRIIKPVSGIRNLTKADLKYNGETPDIAVDPETYKVTVDGVEVTSQPSDVLPMAQRYFLF.

In terms of domain architecture, Urease spans 132 to 576 (GGIDTHIHFI…LPMAQRYFLF (445 aa)). Ni(2+)-binding residues include His137, His139, and Lys220. Lys220 carries the N6-carboxylysine modification. His222 serves as a coordination point for substrate. Ni(2+) contacts are provided by His249 and His275. Catalysis depends on His323, which acts as the Proton donor. A Ni(2+)-binding site is contributed by Asp363.

The protein belongs to the metallo-dependent hydrolases superfamily. Urease alpha subunit family. As to quaternary structure, heterotrimer of UreA (gamma), UreB (beta) and UreC (alpha) subunits. Three heterotrimers associate to form the active enzyme. Ni cation serves as cofactor. In terms of processing, carboxylation allows a single lysine to coordinate two nickel ions.

The protein resides in the cytoplasm. The enzyme catalyses urea + 2 H2O + H(+) = hydrogencarbonate + 2 NH4(+). The protein operates within nitrogen metabolism; urea degradation; CO(2) and NH(3) from urea (urease route): step 1/1. The chain is Urease subunit alpha from Paenarthrobacter aurescens (strain TC1).